Here is a 277-residue protein sequence, read N- to C-terminus: Radial spoke head protein 9 homolog (277 aa).

It belongs to the flagellar radial spoke RSP9 family. Component of axonemal radial spoke complexes.

The protein resides in the cytoplasm. The protein localises to the cytoskeleton. It localises to the cilium axoneme. Its subcellular location is the flagellum axoneme. It is found in the cell projection. The protein resides in the kinocilium. In terms of biological role, functions as part of axonemal radial spoke complexes that play an important part in the motility of sperm and cilia. Essential for both the radial spoke head assembly and the central pair microtubule stability in ependymal motile cilia. Required for motility of olfactory and neural cilia and for the structural integrity of ciliary axonemes in both 9+0 and 9+2 motile cilia. The chain is Radial spoke head protein 9 homolog (rsph9) from Xenopus tropicalis (Western clawed frog).